The primary structure comprises 1200 residues: Chromosome partition protein Smc (1200 aa).

33–40 (PNGSGKSN) contacts ATP. The interval 90–109 (GENLSEPGANHNGNGNGAKI) is disordered. Positions 202-528 (EVQDREERCQ…AASQAQQEVQ (327 aa)) form a coiled coil. The SMC hinge domain occupies 542–656 (PGVCGLVAQL…VFDTLVNARN (115 aa)). The stretch at 692-1046 (TMVSEDTAEV…ERTELLLRIE (355 aa)) forms a coiled coil.

Belongs to the SMC family. Homodimer.

The protein localises to the cytoplasm. Its function is as follows. Required for chromosome condensation and partitioning. The protein is Chromosome partition protein Smc of Synechocystis sp. (strain ATCC 27184 / PCC 6803 / Kazusa).